The chain runs to 299 residues: Protein tantalus (299 aa).

The tract at residues 16-100 (KDNRSPTTNS…RSSTFGARAG (85 aa)) is disordered. The segment covering 20 to 35 (SPTTNSNLSWQLNQMA) has biased composition (polar residues). A compositionally biased stretch (acidic residues) spans 53-69 (ESDDNVSSESHDSDDVD). Residues 84–93 (CISGSSRRSS) show a composition bias toward low complexity. S204 and S264 each carry phosphoserine.

As to quaternary structure, binds to DNA in vitro. Interacts directly with Asx. As to expression, ubiquitously expressed in precellularized embryos. Then it decreases at cellular blastoderm to increase again during germ band extension. During germ band extension, it is highly expressed in somatic and visceral mesoderm. Ubiquitously expressed in imaginal disks. In ovary, it is expressed from stage 10.

It localises to the nucleus. The protein resides in the cytoplasm. The protein localises to the chromosome. In terms of biological role, potential cofactor involved in sensory organ development. Despite its interaction with the Polycomb group protein Asx, it does not regulate the expression of homeotic genes. The sequence is that of Protein tantalus from Drosophila melanogaster (Fruit fly).